Consider the following 1204-residue polypeptide: ATP-dependent helicase/nuclease subunit A (1204 aa).

The region spanning 2-472 (PQFTKEQEKA…ILLSDNFRST (471 aa)) is the UvrD-like helicase ATP-binding domain. 23 to 30 (ASAGSGKT) lines the ATP pocket. In terms of domain architecture, UvrD-like helicase C-terminal spans 500–783 (GQLIFGAKYY…RLMTIHGSKG (284 aa)).

Belongs to the helicase family. AddA subfamily. Heterodimer of AddA and AddB/RexB. Mg(2+) serves as cofactor.

The enzyme catalyses Couples ATP hydrolysis with the unwinding of duplex DNA by translocating in the 3'-5' direction.. It carries out the reaction ATP + H2O = ADP + phosphate + H(+). In terms of biological role, the heterodimer acts as both an ATP-dependent DNA helicase and an ATP-dependent, dual-direction single-stranded exonuclease. Recognizes the chi site generating a DNA molecule suitable for the initiation of homologous recombination. The AddA nuclease domain is required for chi fragment generation; this subunit has the helicase and 3' -&gt; 5' nuclease activities. The chain is ATP-dependent helicase/nuclease subunit A from Lactobacillus helveticus (strain DPC 4571).